The chain runs to 563 residues: GTPase Obg (563 aa).

Positions 2–168 (SDFVDRVTVH…RDVILELKSI (167 aa)) constitute an Obg domain. Residues 169–349 (ADVALVGFPS…LNFALSALVH (181 aa)) form the OBG-type G domain. GTP contacts are provided by residues 175–182 (GFPSAGKS), 200–204 (FTTLV), 221–224 (DVPG), 301–304 (NKID), and 330–332 (STA). Residues Ser182 and Thr202 each contribute to the Mg(2+) site. Positions 383–469 (DEGGSALEFT…ARMVEFDWDP (87 aa)) constitute an OCT domain. Residues 529-563 (RKAGHWADPTVDDDRHDETSLFGHGESSEDGETEE) form a disordered region.

It belongs to the TRAFAC class OBG-HflX-like GTPase superfamily. OBG GTPase family. As to quaternary structure, monomer. The cofactor is Mg(2+).

It localises to the cytoplasm. In terms of biological role, an essential GTPase which binds GTP, GDP and possibly (p)ppGpp with moderate affinity, with high nucleotide exchange rates and a fairly low GTP hydrolysis rate. Plays a role in control of the cell cycle, stress response, ribosome biogenesis and in those bacteria that undergo differentiation, in morphogenesis control. This chain is GTPase Obg, found in Bifidobacterium longum (strain NCC 2705).